The primary structure comprises 164 residues: Phosphopantetheine adenylyltransferase (164 aa).

Ser9 contributes to the substrate binding site. ATP-binding positions include 9–10 (SF) and His17. Substrate-binding residues include Lys41, Leu73, and Lys87. ATP is bound by residues 88–90 (GLR), Glu98, and 123–129 (YSYISSS).

The protein belongs to the bacterial CoaD family. Homohexamer. The cofactor is Mg(2+).

The protein resides in the cytoplasm. The catalysed reaction is (R)-4'-phosphopantetheine + ATP + H(+) = 3'-dephospho-CoA + diphosphate. The protein operates within cofactor biosynthesis; coenzyme A biosynthesis; CoA from (R)-pantothenate: step 4/5. Its function is as follows. Reversibly transfers an adenylyl group from ATP to 4'-phosphopantetheine, yielding dephospho-CoA (dPCoA) and pyrophosphate. In Clostridium perfringens (strain SM101 / Type A), this protein is Phosphopantetheine adenylyltransferase.